We begin with the raw amino-acid sequence, 136 residues long: Urease subunit beta (136 aa).

The segment at 113 to 136 is disordered; the sequence is NDEYAGVFGDNGAENVNKKGGKRS.

It belongs to the urease beta subunit family. Heterotrimer of UreA (gamma), UreB (beta) and UreC (alpha) subunits. Three heterotrimers associate to form the active enzyme.

Its subcellular location is the cytoplasm. It carries out the reaction urea + 2 H2O + H(+) = hydrogencarbonate + 2 NH4(+). It participates in nitrogen metabolism; urea degradation; CO(2) and NH(3) from urea (urease route): step 1/1. The sequence is that of Urease subunit beta from Staphylococcus aureus (strain USA300).